Here is a 1163-residue protein sequence, read N- to C-terminus: Restriction of telomere capping protein 1 (1163 aa).

The segment at 24-52 is disordered; that stretch reads GTPQSSNSPSANSSISSHKSSKRLSKNQL. A compositionally biased stretch (low complexity) spans 28 to 41; it reads SSNSPSANSSISSH. WD repeat units follow at residues 129–169, 175–214, 221–265, 274–313, and 346–392; these read RNPN…KGTL, DHRR…TKPV, LHND…GSNM, LHAG…SLRT, and GMGS…IPKQ. Disordered stretches follow at residues 525–606 and 833–881; these read AGSS…GSFG and DVHS…DSTT. Composition is skewed to polar residues over residues 539 to 556, 571 to 585, 593 to 606, and 868 to 880; these read LTRS…TKSP, SPPS…STYT, NPSQ…GSFG, and VHSQ…IDST. The RING-type; degenerate zinc finger occupies 1114–1157; that stretch reads CVFCNEPCKGLVVAISLKCGHRGHFGCLKEWFIDEQNVECPGGC.

The protein belongs to the WD repeat RTC1 family.

The protein localises to the vacuole. May be involved in a process influencing telomere capping. The polypeptide is Restriction of telomere capping protein 1 (RTC1) (Lodderomyces elongisporus (strain ATCC 11503 / CBS 2605 / JCM 1781 / NBRC 1676 / NRRL YB-4239) (Yeast)).